The sequence spans 428 residues: Tol-Pal system protein TolB (428 aa).

The first 24 residues, 1–24 (MPSLKTLLRGVLVAAMLVAGSARA), serve as a signal peptide directing secretion.

It belongs to the TolB family. The Tol-Pal system is composed of five core proteins: the inner membrane proteins TolA, TolQ and TolR, the periplasmic protein TolB and the outer membrane protein Pal. They form a network linking the inner and outer membranes and the peptidoglycan layer.

It localises to the periplasm. Functionally, part of the Tol-Pal system, which plays a role in outer membrane invagination during cell division and is important for maintaining outer membrane integrity. In Chromobacterium violaceum (strain ATCC 12472 / DSM 30191 / JCM 1249 / CCUG 213 / NBRC 12614 / NCIMB 9131 / NCTC 9757 / MK), this protein is Tol-Pal system protein TolB.